The sequence spans 1239 residues: MASAMESDSSGGSGGADAQPPLAEVDGGLARVTRQLLLSGDDPAARLRALMPLELGIFGLGDLAQPVLVRDFLNTLTLMSGHAYPAAVLRHHAYYLLRAASFSRRSFGLGHLEAALDVLASSLPPTTASPATDDPLDGSRLIAETRALAAAYRRIIEEGSGEVLAVSGPTATFAFVEELVADTYLARWDAFPREGLSFYAFNAAKTTLGRWLVTVYAETNRYPWAAAGQGQPTAADIKAMAVELVEHSGGGAGGGEGEESGGGLFHRPESLSSVVASLPLARRRAVEILGVYAEASGGQTPPVAAVPVLAFDAARLRLLEPSGALFYDYVYEALLWDQTYGVPDSVIEAFLAGMAAEMEALAARVQEAAGSRASFSPAAIEQVATVLLSAGLNETVAGDYAMMLASVPRVSRSRWRWLEATAALLESLSGFALHFFRLLPTASPTSRFARVARAAYLRAEAEAVDRRARRTSGPSTPAAAPAATAVGVGAAADPWDAVTPLRIFIVPPPAAEYEQVAGDLSSELLRSLLWVRYSRLWQAPAPAPALPCKPPLLPGEQGRRQWTAAVAAAPRTDVEAYCRSLRAGQTARADPAYVHSPFFPAAFIEFQIWPALRRVLSNELPKTRSLAALRWLVSFGSDLALPSPELTRARRPLELIYATVWEIYDGAPPMPGESPQAVGLRPLNLEGEGKAGDAGAEGAEDEEGGGPWGLSSHDAVLRIMDAVREVSGIISETISASERAAEAPPLAWPTSLFSLLFTLRYSTTAESLGLATRRFLVSGETLSEDISRLTGAAWRLCSRPLLYDAETGRVQIPLATEEEEEAVVAVKEKSVSSSPRHYSTDLQTLKSVVEGIQDVCRDAAARWALATADTATLRRRLLVPALRESRGIADHPLWAHTSEPLRPDLEELNERVEHALELGYSLTGALRRSVAYRFRDYTFARLFQPPAIDAERAEAIVRRDARPPPVFIPAPRRLPQGGADTPPPLSMDDILYLGKSICKALVDVLDHHPAAPETTPIKTYTPAMDLNPEQITVTPRSPSVLAAFARTARVQTHHLVPALTDDSPSPVGQTPPPFRILPAKKLAAILLGNGRNASKRRASRDLSPPPHGRWRAVLDSSPFSFSSSDFSDQDEGEGGEADLRGVPGGGGEGAYEEDRERPSDIDTAARAQKVETSCPRRRSPRTTPSPSRRASGGGGPDRGEAEAHTYPPYLSAAAAASRVRPRTRRGATRRPPRPTAEDE.

The span at 1–10 (MASAMESDSS) shows a compositional bias: low complexity. Disordered regions lie at residues 1–20 (MASAMESDSSGGSGGADAQP), 672–708 (GESPQAVGLRPLNLEGEGKAGDAGAEGAEDEEGGGPW), and 1090–1239 (GRNA…AEDE). Positions 618–1239 (NELPKTRSLA…RPPRPTAEDE (622 aa)) are interaction with large tegument protein. Low complexity predominate over residues 1115–1126 (DSSPFSFSSSDF). Residues 1127–1136 (SDQDEGEGGE) show a composition bias toward acidic residues. Positions 1181–1190 (RTTPSPSRRA) are enriched in low complexity. Residues 1219 to 1232 (VRPRTRRGATRRPP) are compositionally biased toward basic residues.

Belongs to the herpesviridae inner tegument protein family. Interacts (via C-terminus) with the large tegument protein/LTP (via N-terminus).

The protein localises to the virion tegument. The protein resides in the host cytoplasm. Its subcellular location is the host nucleus. It is found in the host Golgi apparatus. It localises to the host trans-Golgi network. Functionally, plays an essential role in cytoplasmic secondary envelopment during viral egress. Interacts with the capsid via the large tegument protein/LTP and participates in its transport to the host trans-Golgi network (TGN) where secondary envelopment occurs. Modulates tegumentation and capsid accumulation at the viral assembly complex. The protein is Inner tegument protein of Homo sapiens (Human).